The following is a 590-amino-acid chain: MLKLTKKQLIIVLGIAIVVVSAIGYAVYTQYFNEDKLEISYTAFLESTEAGEIRTVNLSEGPKLTGVFEDGKQFITDHPRTDSLKENLLLHGIQVRETTDQYSVVQVITFVVLIGGFIGVAIFLSKKNATQTSKEYDKMSDVEFSTQKDSSIRFADIAGNQEAKENAMELVDFLKNPEKYSRYGAKMPKGVILYGSPGTGKTLLARALASEAGVEFLAVSGSDFVQVYAGLGAGRIRNLFKKAKDKGKCVIFIDEIDAIGKKRDRGGLGGSDESDRTLNALLTEMSGFKGSEGIIVMAATNRLDILDDALLRPGRFDRQIEIGLPDLKARQDILQLYTQNRPIDPKVCLRGIAQQTVYFSGAKLENLMNEAAIYAAREEADFITEGHIDKAFYTVVAGEEKKDRSNIQPIDRKITAYHEAGHAVATKLLCPQNKVTKVTIIPSTKGAGGFSMNIPPDQMYHTKNSMVNSIKVALSGRIIEEIVFGPDFVTTGASNDIQKATEILGAMIKQFGMNDEVGMINYDVLFGRQGACDQRVMELTKLNMKRLYDETKVLLEKSLNIVEAVAEDLLIKETLKEDEINEIFSGFQSM.

The Cytoplasmic segment spans residues 1 to 8 (MLKLTKKQ). The chain crosses the membrane as a helical span at residues 9 to 29 (LIIVLGIAIVVVSAIGYAVYT). At 30–103 (QYFNEDKLEI…QVRETTDQYS (74 aa)) the chain is on the extracellular side. A helical transmembrane segment spans residues 104–124 (VVQVITFVVLIGGFIGVAIFL). The Cytoplasmic segment spans residues 125-590 (SKKNATQTSK…NEIFSGFQSM (466 aa)). 195–202 (GSPGTGKT) is a binding site for ATP. Position 418 (H418) interacts with Zn(2+). E419 is a catalytic residue. The Zn(2+) site is built by H422 and D496.

It in the central section; belongs to the AAA ATPase family. The protein in the C-terminal section; belongs to the peptidase M41 family. In terms of assembly, homohexamer. It depends on Zn(2+) as a cofactor.

Its subcellular location is the cell membrane. Its function is as follows. Acts as a processive, ATP-dependent zinc metallopeptidase for both cytoplasmic and membrane proteins. Plays a role in the quality control of integral membrane proteins. This chain is ATP-dependent zinc metalloprotease FtsH 1, found in Alkaliphilus metalliredigens (strain QYMF).